The primary structure comprises 213 residues: Thiamine-phosphate synthase (213 aa).

4-amino-2-methyl-5-(diphosphooxymethyl)pyrimidine is bound by residues 40–44 (QFREK) and Asn75. Residues Asp76 and Asp95 each coordinate Mg(2+). Residue Ser113 participates in 4-amino-2-methyl-5-(diphosphooxymethyl)pyrimidine binding. 139–141 (TPS) contributes to the 2-[(2R,5Z)-2-carboxy-4-methylthiazol-5(2H)-ylidene]ethyl phosphate binding site. A 4-amino-2-methyl-5-(diphosphooxymethyl)pyrimidine-binding site is contributed by Lys142. 2-[(2R,5Z)-2-carboxy-4-methylthiazol-5(2H)-ylidene]ethyl phosphate-binding positions include Gly171 and 191–192 (IS).

The protein belongs to the thiamine-phosphate synthase family. Requires Mg(2+) as cofactor.

The enzyme catalyses 2-[(2R,5Z)-2-carboxy-4-methylthiazol-5(2H)-ylidene]ethyl phosphate + 4-amino-2-methyl-5-(diphosphooxymethyl)pyrimidine + 2 H(+) = thiamine phosphate + CO2 + diphosphate. It catalyses the reaction 2-(2-carboxy-4-methylthiazol-5-yl)ethyl phosphate + 4-amino-2-methyl-5-(diphosphooxymethyl)pyrimidine + 2 H(+) = thiamine phosphate + CO2 + diphosphate. It carries out the reaction 4-methyl-5-(2-phosphooxyethyl)-thiazole + 4-amino-2-methyl-5-(diphosphooxymethyl)pyrimidine + H(+) = thiamine phosphate + diphosphate. It participates in cofactor biosynthesis; thiamine diphosphate biosynthesis; thiamine phosphate from 4-amino-2-methyl-5-diphosphomethylpyrimidine and 4-methyl-5-(2-phosphoethyl)-thiazole: step 1/1. Condenses 4-methyl-5-(beta-hydroxyethyl)thiazole monophosphate (THZ-P) and 2-methyl-4-amino-5-hydroxymethyl pyrimidine pyrophosphate (HMP-PP) to form thiamine monophosphate (TMP). In Staphylococcus aureus (strain bovine RF122 / ET3-1), this protein is Thiamine-phosphate synthase.